Reading from the N-terminus, the 759-residue chain is MPAFSCAFPGCRRDLLVIVLVVFVGIGLPIEASAPAYQSHGTEGSHLTNITNTKKAFPVLAVNYEHVRKPFEIALWILLALLMKLGFHLIPRLSAVVPESCLLIVVGLLVGGLIKVIGEEPPVLDSQLFFLCLLPPIILDAGYFLPIRPFTENVGTILVFAVIGTLWNAFFMGGLLYALCQIESVGLSGVDLLACLLFGSIVSAVDPVAVLAVFEEIHINELVHILVFGESLLNDAVTVVLYNLFEEFSKVGTVTVLDVFLGVVCFFVVSLGGVLVGAIYGFLAAFTSRFTSHTRVIEPLFVFLYSYMAYLSSEMFHLSGIMALIACGVVMRPYVEANISHKSYTTIKYFLKMWSSVSETLIFIFLGVSTVAGPHAWNWTFVITTVILCLVSRVLGVIGLTFIINKFRIVKLTKKDQFIVAYGGLRGAIAFSLGYLLSNSHQMRNLFLTAIITVIFFTVFVQGMTIRPLVELLAVKKKKESKPSINEEIHTEFLDHLLTGVEGVCGHYGHYHWKEKLNRFNKTYVKRWLIAGENFKEPELIAFYRKMELKQAIMMVESGQLPSVLPSTISMQNIQPRAIPRVSKKREEEIRRILRANLQNNKQKMRSRSYSRHTLFDADEEDNVSEVRLRKTKMEMERRVSVMERRMSHYLTVPANRESPRPGVRRVRFESDNQVFSADSFPTVHFEQPSPPSTPDAVSLEEEEEEVPKRPSLKADIEGPRGNASDNHQGELDYQRLARCLSDPGPNKDKEDDDPFMSC.

Residues 1-14 (MPAFSCAFPGCRRD) are Cytoplasmic-facing. Residues 15–34 (LLVIVLVVFVGIGLPIEASA) traverse the membrane as a helical segment. Over 35–75 (PAYQSHGTEGSHLTNITNTKKAFPVLAVNYEHVRKPFEIAL) the chain is Extracellular. Residue Asn49 is glycosylated (N-linked (GlcNAc...) asparagine). Residues 76 to 95 (WILLALLMKLGFHLIPRLSA) traverse the membrane as a helical segment. The Cytoplasmic portion of the chain corresponds to 96 to 97 (VV). The chain crosses the membrane as a helical span at residues 98-117 (PESCLLIVVGLLVGGLIKVI). The Extracellular segment spans residues 118 to 122 (GEEPP). Residues 123–142 (VLDSQLFFLCLLPPIILDAG) traverse the membrane as a helical segment. Topologically, residues 143-149 (YFLPIRP) are cytoplasmic. Residues 150–169 (FTENVGTILVFAVIGTLWNA) form a helical membrane-spanning segment. Topologically, residues 170–195 (FFMGGLLYALCQIESVGLSGVDLLAC) are extracellular. The chain crosses the membrane as a helical span at residues 196–214 (LLFGSIVSAVDPVAVLAVF). Over 215–225 (EEIHINELVHI) the chain is Cytoplasmic. Residues 226-244 (LVFGESLLNDAVTVVLYNL) form a helical membrane-spanning segment. Residues 245–261 (FEEFSKVGTVTVLDVFL) lie on the Extracellular side of the membrane. A helical transmembrane segment spans residues 262 to 282 (GVVCFFVVSLGGVLVGAIYGF). At 283–311 (LAAFTSRFTSHTRVIEPLFVFLYSYMAYL) the chain is on the cytoplasmic side. Residues 312–330 (SSEMFHLSGIMALIACGVV) form a helical membrane-spanning segment. At 331 to 352 (MRPYVEANISHKSYTTIKYFLK) the chain is on the extracellular side. Residue Asn338 is glycosylated (N-linked (GlcNAc...) asparagine). The chain crosses the membrane as a helical span at residues 353–372 (MWSSVSETLIFIFLGVSTVA). Residues 373–376 (GPHA) lie on the Cytoplasmic side of the membrane. Residues 377 to 398 (WNWTFVITTVILCLVSRVLGVI) form a helical membrane-spanning segment. The Extracellular segment spans residues 399–446 (GLTFIINKFRIVKLTKKDQFIVAYGGLRGAIAFSLGYLLSNSHQMRNL). The chain crosses the membrane as a helical span at residues 447–467 (FLTAIITVIFFTVFVQGMTIR). Over 468–759 (PLVELLAVKK…KEDDDPFMSC (292 aa)) the chain is Cytoplasmic. A phosphoserine; by PKA mark is found at Ser641 and Ser648. The interval 681–759 (FPTVHFEQPS…KEDDDPFMSC (79 aa)) is disordered. Basic and acidic residues predominate over residues 707 to 719 (VPKRPSLKADIEG).

This sequence belongs to the monovalent cation:proton antiporter 1 (CPA1) transporter (TC 2.A.36) family. Post-translationally, activated by cAMP, protein kinase A and protein kinase C.

It is found in the basolateral cell membrane. Functionally, involved in pH regulation to eliminate acids generated by active metabolism or to counter adverse environmental conditions. Major proton extruding system driven by the inward sodium ion chemical gradient. The chain is Na(+)/H(+) exchanger beta from Oncorhynchus mykiss (Rainbow trout).